A 257-amino-acid polypeptide reads, in one-letter code: MKAHKIFWLNLAAIIIISIVVSGGMFLAMKWEQIHLKDGLKKVLSTYPIKNLETLYEIDGHDNPHYENNDQDTWYIESSYSVVGSDELLKEDRMLLKVDKNTHKITGEYDTTTNDRKDATDSTYKSYPVKVVNNKIVFTKDVKDPALKQKIENNQFLIQSGDLTSILNSNDLKVTHDPTTDYYNLSGKLSNDNPNVKQLKRRYNIPSNASTKVELKGMSDLKGNNHQDQKLYFYFSSPGKNQIIYKESLTYNKLSEH.

A helical transmembrane segment spans residues 6-26 (IFWLNLAAIIIISIVVSGGMF).

This sequence belongs to the staphylococcal tandem lipoprotein family.

The protein resides in the cell membrane. This is an uncharacterized protein from Staphylococcus aureus (strain N315).